The primary structure comprises 272 residues: Undecaprenyl-diphosphatase (272 aa).

7 helical membrane passes run Ser-39–Phe-59, Trp-87–Ile-107, Ser-113–Asp-133, Ile-145–Val-165, Phe-188–Leu-208, Pro-220–Leu-240, and Phe-251–Leu-271.

This sequence belongs to the UppP family.

The protein localises to the cell inner membrane. The catalysed reaction is di-trans,octa-cis-undecaprenyl diphosphate + H2O = di-trans,octa-cis-undecaprenyl phosphate + phosphate + H(+). Catalyzes the dephosphorylation of undecaprenyl diphosphate (UPP). Confers resistance to bacitracin. The chain is Undecaprenyl-diphosphatase from Trichlorobacter lovleyi (strain ATCC BAA-1151 / DSM 17278 / SZ) (Geobacter lovleyi).